A 932-amino-acid chain; its full sequence is DNA mismatch repair protein MutS (932 aa).

Position 615-622 (615-622 (GPNMAGKS)) interacts with ATP.

Belongs to the DNA mismatch repair MutS family.

In terms of biological role, this protein is involved in the repair of mismatches in DNA. It is possible that it carries out the mismatch recognition step. This protein has a weak ATPase activity. The protein is DNA mismatch repair protein MutS of Clostridium botulinum (strain Okra / Type B1).